We begin with the raw amino-acid sequence, 217 residues long: Peptidyl-tRNA hydrolase (217 aa).

Tyr14 is a binding site for tRNA. His19 acts as the Proton acceptor in catalysis. Tyr64, Asn66, and Asn113 together coordinate tRNA. Residues 182 to 217 form a disordered region; it reads MNRINAPPPKPKREQKRSSDAPDSSSDTNTSNASDG. A compositionally biased stretch (low complexity) spans 202-217; the sequence is APDSSSDTNTSNASDG.

Belongs to the PTH family. As to quaternary structure, monomer.

It localises to the cytoplasm. It carries out the reaction an N-acyl-L-alpha-aminoacyl-tRNA + H2O = an N-acyl-L-amino acid + a tRNA + H(+). Hydrolyzes ribosome-free peptidyl-tRNAs (with 1 or more amino acids incorporated), which drop off the ribosome during protein synthesis, or as a result of ribosome stalling. Functionally, catalyzes the release of premature peptidyl moieties from peptidyl-tRNA molecules trapped in stalled 50S ribosomal subunits, and thus maintains levels of free tRNAs and 50S ribosomes. This chain is Peptidyl-tRNA hydrolase, found in Roseiflexus sp. (strain RS-1).